The chain runs to 234 residues: Zein-alpha 19B1 (234 aa).

The N-terminal stretch at 1–21 (MAAKIFCLLMLLGLSASAATA) is a signal peptide.

The protein belongs to the zein family.

Zeins are major seed storage proteins. The sequence is that of Zein-alpha 19B1 from Zea mays (Maize).